Consider the following 230-residue polypeptide: MRIKICGITKLDQGQAIAEIGATALGFICVPKSPRYITPENIKNIIQKLPINIDKIGVFVNPKIDLLSEIITNTQLNGIQLHGDESPEFCNQLRHSIPNNIEIIKALRIKSPQDLKKANIYENYIDTLLLDAYHPEKLGGTGKTLDWKIIEEFHPTSPWLLAGGLTPENVTKAIQKFILVSQTQIESNHKFNHNFCGIDLSSGVETAPGDKNLVKVRKLFSSLATLTMKK.

This sequence belongs to the TrpF family.

It carries out the reaction N-(5-phospho-beta-D-ribosyl)anthranilate = 1-(2-carboxyphenylamino)-1-deoxy-D-ribulose 5-phosphate. The protein operates within amino-acid biosynthesis; L-tryptophan biosynthesis; L-tryptophan from chorismate: step 3/5. This Trichodesmium erythraeum (strain IMS101) protein is N-(5'-phosphoribosyl)anthranilate isomerase.